The primary structure comprises 1061 residues: Error-prone DNA polymerase (1061 aa).

It belongs to the DNA polymerase type-C family. DnaE2 subfamily.

Its subcellular location is the cytoplasm. It catalyses the reaction DNA(n) + a 2'-deoxyribonucleoside 5'-triphosphate = DNA(n+1) + diphosphate. Its function is as follows. DNA polymerase involved in damage-induced mutagenesis and translesion synthesis (TLS). It is not the major replicative DNA polymerase. This Bdellovibrio bacteriovorus (strain ATCC 15356 / DSM 50701 / NCIMB 9529 / HD100) protein is Error-prone DNA polymerase.